A 157-amino-acid polypeptide reads, in one-letter code: Probable calcium-binding protein CML15 (157 aa).

EF-hand domains lie at 3–38 (DQIR…LGLK), 39–74 (PSGD…DLNE), 78–113 (INSE…MGQP), and 114–149 (LTYK…SAVD). Ca(2+) contacts are provided by D16, D18, D20, S22, E27, D52, N54, N56, E63, D91, D93, N95, E102, D127, N129, D131, and E138.

Functionally, potential calcium sensor. This chain is Probable calcium-binding protein CML15 (CML15), found in Arabidopsis thaliana (Mouse-ear cress).